Here is a 476-residue protein sequence, read N- to C-terminus: Ubiquinone biosynthesis monooxygenase COQ6, mitochondrial (476 aa).

Residues 1-42 constitute a mitochondrion transit peptide; it reads MAARIGPMAGLLCVRWWSTAQLAARGGPLVACRRWTSSSTDS.

Belongs to the UbiH/COQ6 family. As to quaternary structure, component of a multi-subunit COQ enzyme complex, composed of at least COQ3, COQ4, COQ5, COQ6, COQ7 and COQ9. Interacts with COQ8B and COQ7. Requires FAD as cofactor. In the kidney, expressed almost exclusively in glomerular podocytes. In the inner ear, expressed in the spiral ganglion, as well as in stria vascularis and spiral ligament cells.

It localises to the mitochondrion inner membrane. It is found in the golgi apparatus. The protein localises to the cell projection. It catalyses the reaction 4-hydroxy-3-(all-trans-decaprenyl)benzoate + 2 reduced [2Fe-2S]-[ferredoxin] + O2 + 2 H(+) = 3,4-dihydroxy-5-(all-trans-decaprenyl)benzoate + 2 oxidized [2Fe-2S]-[ferredoxin] + H2O. It carries out the reaction 2-methoxy-6-(all-trans-decaprenyl)phenol + 2 reduced [2Fe-2S]-[ferredoxin] + O2 + 2 H(+) = 2-methoxy-6-(all-trans-decaprenyl)benzene-1,4-diol + 2 oxidized [2Fe-2S]-[ferredoxin] + H2O. It functions in the pathway cofactor biosynthesis; ubiquinone biosynthesis. In terms of biological role, FAD-dependent monooxygenase required for two non-consecutive steps during ubiquinone biosynthesis. Required for the C5-ring hydroxylation during ubiquinone biosynthesis by catalyzing the hydroxylation of 4-hydroxy-3-(all-trans-decaprenyl)benzoic acid to 3,4-dihydroxy-5-(all-trans-decaprenyl)benzoic acid. Also acts downstream of COQ4, for the C1-hydroxylation during ubiquinone biosynthesis by catalyzing the hydroxylation of 2-methoxy-6-(all-trans-decaprenyl)phenol to 2-methoxy-6-(all-trans-decaprenyl)benzene-1,4-diol. The electrons required for the hydroxylation reaction are funneled indirectly to COQ6 from NADPH via a ferredoxin/ferredoxin reductase system composed of FDX2 and FDXR. The polypeptide is Ubiquinone biosynthesis monooxygenase COQ6, mitochondrial (Rattus norvegicus (Rat)).